The primary structure comprises 421 residues: Histidine--tRNA ligase (421 aa).

It belongs to the class-II aminoacyl-tRNA synthetase family. As to quaternary structure, homodimer.

Its subcellular location is the cytoplasm. The enzyme catalyses tRNA(His) + L-histidine + ATP = L-histidyl-tRNA(His) + AMP + diphosphate + H(+). The sequence is that of Histidine--tRNA ligase from Coxiella burnetii (strain Dugway 5J108-111).